Consider the following 98-residue polypeptide: uncharacterized protein (98 aa).

This sequence belongs to the HesB/IscA family.

This is an uncharacterized protein from Staphylococcus epidermidis (strain ATCC 35984 / DSM 28319 / BCRC 17069 / CCUG 31568 / BM 3577 / RP62A).